The sequence spans 1129 residues: Phytochrome A type 4 (1129 aa).

Positions 1 to 21 (MSSSRPASSSSSRNRQSSRAR) are enriched in low complexity. Residues 1 to 24 (MSSSRPASSSSSRNRQSSRARVLA) are disordered. The GAF domain maps to 217 to 402 (SMEVLCNTVV…VFAVHVNREF (186 aa)). Residue cysteine 322 participates in phytochromobilin binding. PAS domains are found at residues 618 to 688 (VTSE…LQGK) and 748 to 822 (VEGD…VSLC). The region spanning 902–1122 (YMRHAINNPL…TFILTAELAS (221 aa)) is the Histidine kinase domain.

The protein belongs to the phytochrome family. In terms of assembly, homodimer. In terms of processing, contains one covalently linked phytochromobilin chromophore.

Its function is as follows. Regulatory photoreceptor which exists in two forms that are reversibly interconvertible by light: the Pr form that absorbs maximally in the red region of the spectrum and the Pfr form that absorbs maximally in the far-red region. Photoconversion of Pr to Pfr induces an array of morphogenic responses, whereas reconversion of Pfr to Pr cancels the induction of those responses. Pfr controls the expression of a number of nuclear genes including those encoding the small subunit of ribulose-bisphosphate carboxylase, chlorophyll A/B binding protein, protochlorophyllide reductase, rRNA, etc. It also controls the expression of its own gene(s) in a negative feedback fashion. This Avena sativa (Oat) protein is Phytochrome A type 4 (PHYA4).